The following is a 185-amino-acid chain: Protein E3 homolog (185 aa).

One can recognise a Z-binding domain in the interval 7–73 (TVNDAEIFSL…SNPPKWFKNY (67 aa)). The DRBM domain maps to 112–179 (NPCIVLNEYC…SKITMDEILD (68 aa)).

The protein belongs to the poxviridae E3 protein family.

Its function is as follows. RNA-binding protein that plays a role in the inhibition of multiple cellular antiviral responses activated by double-stranded RNA (dsRNA), such as inhibition of PKR activation, necroptosis, and IFN-mediated antiviral activities. Recognizes and binds Z-RNA structures via its Z-binding domain and dsRNA via its DRBM domain: RNA-binding activity is required to escape host ZBP1-dependent necroptosis. Mechanistically, the Z-binding domain binds Z-RNAs that are produced during Yaba-like disease virus infection, thereby competing with Z-RNA detection by host ZBP1, suppressing ZBP1-dependent necroptosis. This Yaba-like disease virus (YLDV) protein is Protein E3 homolog.